Here is a 380-residue protein sequence, read N- to C-terminus: MAPNLRKSHPLLKIINNSLIDLPTPSNISAWWNFGSLLGICLLTQILTGLLLATHYTADTTLAFSSVAHTCRNVQYGWLIRNLHANGASFFFICIYLHIGRGFYYGSYLNKETWNTGVILLLTLMATAFVGYVLPWGQMSFWGATVITNLFSAIPYIGQTLVEWAWGGFSVDNPTLTRFFALHFLLPFMIAGLALIHLTFLHESGSNNPLGILSNCDKIPFHPYFSLKDILGFIIMFLPLTTLALFSPNLLGDPENFTPANPLITPPHIKPEWYFLFAYAILRSIPNKLGGVLALAASVLVLFLTPLLHKSKQRAMTFRPLSQLLFWTLVTNLCILTWVGSQPVEHPFIIIGQLASLTYFTILLLLFPIIGALENKMLNY.

Transmembrane regions (helical) follow at residues 34–54 (FGSL…LLAT), 78–99 (WLIR…YLHI), 114–134 (WNTG…GYVL), and 179–199 (FFAL…IHLT). The heme b site is built by histidine 84 and histidine 98. Heme b is bound by residues histidine 183 and histidine 197. Residue histidine 202 participates in a ubiquinone binding. The next 4 membrane-spanning stretches (helical) occupy residues 227 to 247 (LKDI…ALFS), 289 to 309 (LGGV…PLLH), 321 to 341 (LSQL…WVGS), and 348 to 368 (FIII…LLFP).

It belongs to the cytochrome b family. In terms of assembly, the cytochrome bc1 complex contains 11 subunits: 3 respiratory subunits (MT-CYB, CYC1 and UQCRFS1), 2 core proteins (UQCRC1 and UQCRC2) and 6 low-molecular weight proteins (UQCRH/QCR6, UQCRB/QCR7, UQCRQ/QCR8, UQCR10/QCR9, UQCR11/QCR10 and a cleavage product of UQCRFS1). This cytochrome bc1 complex then forms a dimer. The cofactor is heme b.

It is found in the mitochondrion inner membrane. Component of the ubiquinol-cytochrome c reductase complex (complex III or cytochrome b-c1 complex) that is part of the mitochondrial respiratory chain. The b-c1 complex mediates electron transfer from ubiquinol to cytochrome c. Contributes to the generation of a proton gradient across the mitochondrial membrane that is then used for ATP synthesis. In Cepphus grylle (Black guillemot), this protein is Cytochrome b (MT-CYB).